We begin with the raw amino-acid sequence, 285 residues long: MDSRTMTLIQAIVIAILQGATELFPVSSLGHAVIVPALLGWAFDPHGEIFLPFLVMLHLGTAIALLVYFRNDWAAIFQGLRGRDGSQRQAESIHILALLVVATIPAVIIGGLLEHWLRALFGTARYAAIFLFLNGLLLLLTERMKSRQPVQGGYAIASLTYADAAIIGLWQCLAFLPGISRSGATIIGALFRGLNHEGAARFSFLMAQPVIIAATVREALHMRHVAIPPGQMQVATIGAMVAAVTALASTAFLMRYFHNHERWALSPFGYYCVLAGAVSFFILGH.

Transmembrane regions (helical) follow at residues 12-34, 49-69, 93-113, 120-140, 159-179, 234-254, and 263-283; these read IVIA…HAVI, IFLP…LVYF, IHIL…GGLL, LFGT…LLLL, LTYA…LPGI, VATI…AFLM, and WALS…FFIL.

Belongs to the UppP family.

The protein localises to the cell inner membrane. The catalysed reaction is di-trans,octa-cis-undecaprenyl diphosphate + H2O = di-trans,octa-cis-undecaprenyl phosphate + phosphate + H(+). In terms of biological role, catalyzes the dephosphorylation of undecaprenyl diphosphate (UPP). Confers resistance to bacitracin. The protein is Undecaprenyl-diphosphatase of Gluconacetobacter diazotrophicus (strain ATCC 49037 / DSM 5601 / CCUG 37298 / CIP 103539 / LMG 7603 / PAl5).